A 396-amino-acid chain; its full sequence is Elongation factor Tu (396 aa).

The tr-type G domain maps to 10-206; it reads KPHVNVGTIG…ALDSYIPTPE (197 aa). The segment at 19–26 is G1; that stretch reads GHVDHGKT. 19-26 is a binding site for GTP; it reads GHVDHGKT. Thr26 contacts Mg(2+). Residues 60–64 form a G2 region; the sequence is GITIN. A G3 region spans residues 81–84; that stretch reads DCPG. Residues 81–85 and 136–139 each bind GTP; these read DCPGH and NKCD. Residues 136–139 are G4; sequence NKCD. Residues 174–176 are G5; sequence SAL.

Belongs to the TRAFAC class translation factor GTPase superfamily. Classic translation factor GTPase family. EF-Tu/EF-1A subfamily. Monomer.

The protein resides in the cytoplasm. It carries out the reaction GTP + H2O = GDP + phosphate + H(+). In terms of biological role, GTP hydrolase that promotes the GTP-dependent binding of aminoacyl-tRNA to the A-site of ribosomes during protein biosynthesis. This is Elongation factor Tu from Azoarcus sp. (strain BH72).